The primary structure comprises 216 residues: Chloramphenicol acetyltransferase (216 aa).

Histidine 189 functions as the Proton acceptor in the catalytic mechanism.

It belongs to the chloramphenicol acetyltransferase family. As to quaternary structure, homotrimer.

It catalyses the reaction chloramphenicol + acetyl-CoA = chloramphenicol 3-acetate + CoA. Functionally, this enzyme is an effector of chloramphenicol resistance in bacteria. The polypeptide is Chloramphenicol acetyltransferase (cat) (Staphylococcus aureus).